Consider the following 408-residue polypeptide: L-lactate oxidase (408 aa).

An FMN hydroxy acid dehydrogenase domain is found at 14-370; that stretch reads NEAIKMVNVD…KHADIRQINY (357 aa). Y40 is a binding site for pyruvate. Residues 93–95, S122, and Q144 each bind FMN; that span reads PIA. Residue Y146 participates in pyruvate binding. T172 contacts FMN. A pyruvate-binding site is contributed by R181. FMN contacts are provided by K241 and S263. H265 and R268 together coordinate pyruvate. Catalysis depends on H265, which acts as the Proton acceptor. FMN is bound by residues 296 to 300 and R320; that span reads DSGVR.

The protein belongs to the FMN-dependent alpha-hydroxy acid dehydrogenase family. As to quaternary structure, homotetramer. FMN is required as a cofactor.

The catalysed reaction is a (2S)-2-hydroxycarboxylate + O2 = a 2-oxocarboxylate + H2O2. It carries out the reaction (S)-lactate + O2 = pyruvate + H2O2. The enzyme catalyses 2-hydroxyoctanoate + O2 = 2-oxooctanoate + H2O2. It catalyses the reaction glycolate + O2 = glyoxylate + H2O2. The catalysed reaction is mandelate + O2 = phenylglyoxylate + H2O2. It carries out the reaction 2-hydroxyoctadecanoate + O2 = 2-oxooctadecanoate + H2O2. Its function is as follows. Oxidase that catalyzes the oxidation of a broad range of 2-hydroxyacids in vitro, such as (S)-lactate, 2-hydroxyoctanoate, and to a lesser extent glycolate, mandelate and 2-hydroxyoctadecanoate, to the corresponding 2-oxoacids, with a reduction of O2 to H2O2. May be involved in the utilization of L-lactate as an energy source for growth. The chain is L-lactate oxidase from Lactobacillus jensenii.